Here is a 205-residue protein sequence, read N- to C-terminus: Outer-membrane lipoprotein carrier protein (205 aa).

The first 21 residues, 1–21 (MKKIVLLVTLVFSINYSFANA), serve as a signal peptide directing secretion.

It belongs to the LolA family. In terms of assembly, monomer.

The protein localises to the periplasm. Its function is as follows. Participates in the translocation of lipoproteins from the inner membrane to the outer membrane. Only forms a complex with a lipoprotein if the residue after the N-terminal Cys is not an aspartate (The Asp acts as a targeting signal to indicate that the lipoprotein should stay in the inner membrane). The polypeptide is Outer-membrane lipoprotein carrier protein (Francisella philomiragia subsp. philomiragia (strain ATCC 25017 / CCUG 19701 / FSC 153 / O#319-036)).